Reading from the N-terminus, the 880-residue chain is Interference hedgehog (880 aa).

An N-terminal signal peptide occupies residues 1–20 (MTLLTSSLLLFSLLTSRLEA). The Extracellular segment spans residues 21-703 (IPVLEKSPAH…ETFNMSPMLT (683 aa)). Ig-like C2-type domains are found at residues 45-142 (PGVR…TARL), 132-232 (PLVV…ERIQ), 252-340 (PHLL…YIKV), and 346-432 (PQIV…LQVN). 4 disulfide bridges follow: C68-C126, C173-C220, C276-C324, and C367-C414. N-linked (GlcNAc...) asparagine glycosylation is found at N102 and N209. The segment at 426–467 (GTLLQVNPKQIQEPRESGGTHRPKPNQGSKQKQMYPPTPPNV) is disordered. Fibronectin type-III domains are found at residues 461-567 (PPTP…LQPG) and 575-670 (VPEL…TQRP). N466 is a glycosylation site (N-linked (GlcNAc...) asparagine). Residues R497, K501, K503, and R541 each contribute to the heparin site. A glycan (N-linked (GlcNAc...) asparagine) is linked at N557. Residues 662–697 (LKQGRTQRPKTSTTEEPTLQMGDRDTTTPSHNETFN) are disordered. Polar residues-rich tracts occupy residues 665-678 (GRTQ…TEEP) and 688-697 (TTPSHNETFN). Residue N693 is glycosylated (N-linked (GlcNAc...) asparagine). The chain crosses the membrane as a helical span at residues 704–724 (GTIGGGAVLILLLISTCLCVC). The Cytoplasmic portion of the chain corresponds to 725–880 (RRRTSRSRGN…SSGSLNSVGV (156 aa)). 2 disordered regions span residues 728–762 (TSRS…QRQR) and 775–880 (QQQQ…SVGV). 2 stretches are compositionally biased toward low complexity: residues 823–837 (RAGG…NNNN) and 864–880 (SSRS…SVGV).

It belongs to the immunoglobulin superfamily. IHOG family. In terms of assembly, homodimer. Heterotetramer; 2 iHog chains bind 2 hh chains when facilitated by heparin, heparin is required to promote high-affinity interactions between hh and iHog.

The protein resides in the membrane. Functionally, mediates response to the active Hedgehog (Hh) protein signal in embryos, functioning upstream or at the level of patched (ptc). This chain is Interference hedgehog, found in Drosophila sechellia (Fruit fly).